The following is a 236-amino-acid chain: Large ribosomal subunit protein uL1 (236 aa).

This sequence belongs to the universal ribosomal protein uL1 family. Part of the 50S ribosomal subunit.

Its function is as follows. Binds directly to 23S rRNA. The L1 stalk is quite mobile in the ribosome, and is involved in E site tRNA release. Functionally, protein L1 is also a translational repressor protein, it controls the translation of the L11 operon by binding to its mRNA. This chain is Large ribosomal subunit protein uL1, found in Heliobacterium modesticaldum (strain ATCC 51547 / Ice1).